Reading from the N-terminus, the 71-residue chain is ATP synthase subunit c (71 aa).

Helical transmembrane passes span 5–25 (GAAI…AIIV) and 47–67 (FIGV…GFLI).

Belongs to the ATPase C chain family. As to quaternary structure, F-type ATPases have 2 components, F(1) - the catalytic core - and F(0) - the membrane proton channel. F(1) has five subunits: alpha(3), beta(3), gamma(1), delta(1), epsilon(1). F(0) has three main subunits: a(1), b(2) and c(10-14). The alpha and beta chains form an alternating ring which encloses part of the gamma chain. F(1) is attached to F(0) by a central stalk formed by the gamma and epsilon chains, while a peripheral stalk is formed by the delta and b chains.

The protein localises to the cell membrane. Functionally, f(1)F(0) ATP synthase produces ATP from ADP in the presence of a proton or sodium gradient. F-type ATPases consist of two structural domains, F(1) containing the extramembraneous catalytic core and F(0) containing the membrane proton channel, linked together by a central stalk and a peripheral stalk. During catalysis, ATP synthesis in the catalytic domain of F(1) is coupled via a rotary mechanism of the central stalk subunits to proton translocation. In terms of biological role, key component of the F(0) channel; it plays a direct role in translocation across the membrane. A homomeric c-ring of between 10-14 subunits forms the central stalk rotor element with the F(1) delta and epsilon subunits. The sequence is that of ATP synthase subunit c from Alkalihalobacillus alcalophilus (Bacillus alcalophilus).